Here is a 233-residue protein sequence, read N- to C-terminus: Phosphoribosylformylglycinamidine synthase subunit PurQ (233 aa).

The region spanning 3–233 is the Glutamine amidotransferase type-1 domain; sequence SAILVFPGIN…GLVEHLAKAA (231 aa). Cys87 serves as the catalytic Nucleophile. Active-site residues include His204 and Glu206.

Part of the FGAM synthase complex composed of 1 PurL, 1 PurQ and 2 PurS subunits.

The protein resides in the cytoplasm. It catalyses the reaction N(2)-formyl-N(1)-(5-phospho-beta-D-ribosyl)glycinamide + L-glutamine + ATP + H2O = 2-formamido-N(1)-(5-O-phospho-beta-D-ribosyl)acetamidine + L-glutamate + ADP + phosphate + H(+). The catalysed reaction is L-glutamine + H2O = L-glutamate + NH4(+). The protein operates within purine metabolism; IMP biosynthesis via de novo pathway; 5-amino-1-(5-phospho-D-ribosyl)imidazole from N(2)-formyl-N(1)-(5-phospho-D-ribosyl)glycinamide: step 1/2. In terms of biological role, part of the phosphoribosylformylglycinamidine synthase complex involved in the purines biosynthetic pathway. Catalyzes the ATP-dependent conversion of formylglycinamide ribonucleotide (FGAR) and glutamine to yield formylglycinamidine ribonucleotide (FGAM) and glutamate. The FGAM synthase complex is composed of three subunits. PurQ produces an ammonia molecule by converting glutamine to glutamate. PurL transfers the ammonia molecule to FGAR to form FGAM in an ATP-dependent manner. PurS interacts with PurQ and PurL and is thought to assist in the transfer of the ammonia molecule from PurQ to PurL. The sequence is that of Phosphoribosylformylglycinamidine synthase subunit PurQ from Rhodopseudomonas palustris (strain BisB18).